The chain runs to 688 residues: Methionine--tRNA ligase (688 aa).

A 'HIGH' region motif is present at residues 20 to 30 (PYANGSIHLGH). The Zn(2+) site is built by Cys151, Cys154, Cys164, and Cys167. The 'KMSKS' region motif lies at 337–341 (KMSKS). Lys340 is an ATP binding site. Positions 587-688 (TFAQVDLRIA…EGAQPGMRVM (102 aa)) constitute a tRNA-binding domain.

Belongs to the class-I aminoacyl-tRNA synthetase family. MetG type 1 subfamily. In terms of assembly, homodimer. It depends on Zn(2+) as a cofactor.

Its subcellular location is the cytoplasm. It carries out the reaction tRNA(Met) + L-methionine + ATP = L-methionyl-tRNA(Met) + AMP + diphosphate. Functionally, is required not only for elongation of protein synthesis but also for the initiation of all mRNA translation through initiator tRNA(fMet) aminoacylation. The chain is Methionine--tRNA ligase from Vibrio parahaemolyticus serotype O3:K6 (strain RIMD 2210633).